Here is a 341-residue protein sequence, read N- to C-terminus: MNNYLRKLVEGQHLTEEEMYKAGLLLLNENILESEIAAFLVLLKAKGETAEEIYGLVRALREKALPFSNHIQGAMDNCGTGGDGAQTFNISTTSAFVLAGAGVKVAKHGNRAVSSKTGSADLLEELGVNISSTPNEIDYLLKHVGIAFLFAPAMHPALKRIMKIRKELNVPTIFNLIGPLTNPVNLETQFVGIYKRDMLLPVAQVLQKLGRKQALVVNGSGFLDEASLQGENHVVILKDNEIVETSIEPEKYGFSIVKNEEIRGGNSKENAKITLGVLSGEKSVYRDTVLFNAGLALFANGKAKTIEEGITLAAHSIDSGKALAKLNLLIAASNEKLERVN.

5-phospho-alpha-D-ribose 1-diphosphate is bound by residues Gly-79, 82–83, Thr-87, 89–92, 107–115, and Ser-119; these read GD, NIST, and KHGNRAVSS. Position 79 (Gly-79) interacts with anthranilate. Mg(2+) is bound at residue Ser-91. Asn-110 contacts anthranilate. Arg-165 provides a ligand contact to anthranilate. Residues Asp-224 and Glu-225 each contribute to the Mg(2+) site.

Belongs to the anthranilate phosphoribosyltransferase family. As to quaternary structure, homodimer. Requires Mg(2+) as cofactor.

It catalyses the reaction N-(5-phospho-beta-D-ribosyl)anthranilate + diphosphate = 5-phospho-alpha-D-ribose 1-diphosphate + anthranilate. The protein operates within amino-acid biosynthesis; L-tryptophan biosynthesis; L-tryptophan from chorismate: step 2/5. Its function is as follows. Catalyzes the transfer of the phosphoribosyl group of 5-phosphorylribose-1-pyrophosphate (PRPP) to anthranilate to yield N-(5'-phosphoribosyl)-anthranilate (PRA). The chain is Anthranilate phosphoribosyltransferase from Bacillus thuringiensis subsp. konkukian (strain 97-27).